The following is a 317-amino-acid chain: 17-beta-hydroxysteroid dehydrogenase type 6 (317 aa).

An N-terminal signal peptide occupies residues 1–17 (MWLYLAAFVGLYYLLHW). 33 to 57 (FITGCDSGFGNLLARQLDARGLRVL) is a binding site for NAD(+). N-linked (GlcNAc...) asparagine glycosylation is present at Asn161. Ser164 lines the substrate pocket. The Proton acceptor role is filled by Tyr176. N-linked (GlcNAc...) asparagine glycans are attached at residues Asn215 and Asn256.

Belongs to the short-chain dehydrogenases/reductases (SDR) family. In terms of tissue distribution, detected in liver and prostate (at protein level). Detected in adult liver, lung, brain, placenta, prostate, adrenal gland, testis, mammary gland, spleen, spinal cord and uterus. Detected in caudate nucleus, and at lower levels in amygdala, corpus callosum, hippocampus, substantia nigra and thalamus. Detected in fetal lung, liver and brain.

The protein resides in the microsome membrane. Its subcellular location is the early endosome membrane. It carries out the reaction all-trans-retinol--[retinol-binding protein] + NAD(+) = all-trans-retinal--[retinol-binding protein] + NADH + H(+). The enzyme catalyses all-trans-retinol + NAD(+) = all-trans-retinal + NADH + H(+). The catalysed reaction is androsterone + NAD(+) = 5alpha-androstan-3,17-dione + NADH + H(+). It catalyses the reaction testosterone + NAD(+) = androst-4-ene-3,17-dione + NADH + H(+). It carries out the reaction 5alpha-androstane-3alpha,17beta-diol + NAD(+) = 17beta-hydroxy-5alpha-androstan-3-one + NADH + H(+). The enzyme catalyses 17beta-estradiol + NAD(+) = estrone + NADH + H(+). The catalysed reaction is 17beta-estradiol + NADP(+) = estrone + NADPH + H(+). It catalyses the reaction 3alpha-hydroxy-5alpha-pregnan-20-one + NAD(+) = 5alpha-pregnane-3,20-dione + NADH + H(+). It carries out the reaction 5alpha-androstane-3beta,17beta-diol + NAD(+) = 17beta-hydroxy-5alpha-androstan-3-one + NADH + H(+). The enzyme catalyses 3beta-hydroxy-5alpha-androstan-17-one + NAD(+) = 5alpha-androstan-3,17-dione + NADH + H(+). In terms of biological role, NAD-dependent oxidoreductase with broad substrate specificity that shows both oxidative and reductive activity (in vitro). Has 17-beta-hydroxysteroid dehydrogenase activity towards various steroids (in vitro). Converts 5-alpha-androstan-3-alpha,17-beta-diol to androsterone and estradiol to estrone (in vitro). Has 3-alpha-hydroxysteroid dehydrogenase activity towards androsterone (in vitro). Has retinol dehydrogenase activity towards all-trans-retinol (in vitro). Can convert androsterone to epi-androsterone. Androsterone is first oxidized to 5-alpha-androstane-3,17-dione and then reduced to epi-andosterone. Can act on both C-19 and C-21 3-alpha-hydroxysteroids. The sequence is that of 17-beta-hydroxysteroid dehydrogenase type 6 (HSD17B6) from Homo sapiens (Human).